The primary structure comprises 1099 residues: Glutamine--fructose-6-phosphate aminotransferase [isomerizing] (1099 aa).

Cys2 (nucleophile; for GATase activity) is an active-site residue. Residues 2–71 (CGIIGYIGND…DIDGNIGIGH (70 aa)) enclose the Glutamine amidotransferase type-2; first part domain. One can recognise an HTH cro/C1-type domain in the interval 198–253 (LRKVREKLGLTRKDVEKLCGVKEIYIVKIETGKLESIEEERLKKLCSLYGINFEEI). The DOD-type homing endonuclease domain occupies 278-413 (IIGYIIGDGH…IQFLLLRFGI (136 aa)). The Glutamine amidotransferase type-2; second part domain occupies 571–723 (SRWATHGNVC…DGDVVVIKKK (153 aa)). 2 SIS domains span residues 786-923 (LAKC…LLGR) and 948-1089 (TIKE…VDKP). The For Fru-6P isomerization activity role is filled by Lys1094.

It in the C-terminal section; belongs to the SIS family. GFAT subfamily. As to quaternary structure, homodimer. In terms of processing, this protein undergoes a protein self splicing that involves a post-translational excision of the intervening region (intein) followed by peptide ligation.

The protein resides in the cytoplasm. The enzyme catalyses D-fructose 6-phosphate + L-glutamine = D-glucosamine 6-phosphate + L-glutamate. Its function is as follows. Catalyzes the first step in hexosamine metabolism, converting fructose-6P into glucosamine-6P using glutamine as a nitrogen source. The sequence is that of Glutamine--fructose-6-phosphate aminotransferase [isomerizing] (glmS) from Methanocaldococcus jannaschii (strain ATCC 43067 / DSM 2661 / JAL-1 / JCM 10045 / NBRC 100440) (Methanococcus jannaschii).